The following is a 137-amino-acid chain: Putative pre-16S rRNA nuclease (137 aa).

Belongs to the YqgF nuclease family.

The protein resides in the cytoplasm. Its function is as follows. Could be a nuclease involved in processing of the 5'-end of pre-16S rRNA. The chain is Putative pre-16S rRNA nuclease from Bacillus cereus (strain B4264).